A 242-amino-acid polypeptide reads, in one-letter code: Small ribosomal subunit protein uS2 (242 aa).

It belongs to the universal ribosomal protein uS2 family.

This chain is Small ribosomal subunit protein uS2, found in Shewanella loihica (strain ATCC BAA-1088 / PV-4).